Here is a 142-residue protein sequence, read N- to C-terminus: Cytochrome c-type biogenesis protein CcmE (142 aa).

Topologically, residues 1–2 (MK) are cytoplasmic. A helical; Signal-anchor for type II membrane protein membrane pass occupies residues 3 to 23 (GKYLLGILVILGALGYMVFGG). The Periplasmic portion of the chain corresponds to 24-142 (LGRNLVYFLT…EVRKLIEEAQ (119 aa)). Heme is bound by residues His-118 and Tyr-122.

The protein belongs to the CcmE/CycJ family.

It is found in the cell inner membrane. In terms of biological role, heme chaperone required for the biogenesis of c-type cytochromes. Transiently binds heme delivered by CcmC and transfers the heme to apo-cytochromes in a process facilitated by CcmF and CcmH. The chain is Cytochrome c-type biogenesis protein CcmE from Thermus thermophilus (strain ATCC 27634 / DSM 579 / HB8).